A 417-amino-acid polypeptide reads, in one-letter code: Serine hydroxymethyltransferase (417 aa).

(6S)-5,6,7,8-tetrahydrofolate-binding positions include leucine 121 and 125 to 127 (GHL). An N6-(pyridoxal phosphate)lysine modification is found at lysine 229. (6S)-5,6,7,8-tetrahydrofolate is bound at residue 355 to 357 (SPF).

It belongs to the SHMT family. As to quaternary structure, homodimer. It depends on pyridoxal 5'-phosphate as a cofactor.

It is found in the cytoplasm. It carries out the reaction (6R)-5,10-methylene-5,6,7,8-tetrahydrofolate + glycine + H2O = (6S)-5,6,7,8-tetrahydrofolate + L-serine. Its pathway is one-carbon metabolism; tetrahydrofolate interconversion. It participates in amino-acid biosynthesis; glycine biosynthesis; glycine from L-serine: step 1/1. Functionally, catalyzes the reversible interconversion of serine and glycine with tetrahydrofolate (THF) serving as the one-carbon carrier. This reaction serves as the major source of one-carbon groups required for the biosynthesis of purines, thymidylate, methionine, and other important biomolecules. Also exhibits THF-independent aldolase activity toward beta-hydroxyamino acids, producing glycine and aldehydes, via a retro-aldol mechanism. This is Serine hydroxymethyltransferase from Xylella fastidiosa (strain M23).